Reading from the N-terminus, the 446-residue chain is Tubulin beta-3 chain (446 aa).

GTP contacts are provided by Gln-11, Glu-69, Ser-138, Gly-142, Thr-143, Gly-144, Asn-204, and Asn-226. Glu-69 provides a ligand contact to Mg(2+). Residues 421–446 (EYQQYQDATAEEEDYEEEEEDEEVAA) are disordered. Residues 429–446 (TAEEEDYEEEEEDEEVAA) are compositionally biased toward acidic residues.

This sequence belongs to the tubulin family. As to quaternary structure, dimer of alpha and beta chains. A typical microtubule is a hollow water-filled tube with an outer diameter of 25 nm and an inner diameter of 15 nM. Alpha-beta heterodimers associate head-to-tail to form protofilaments running lengthwise along the microtubule wall with the beta-tubulin subunit facing the microtubule plus end conferring a structural polarity. Microtubules usually have 13 protofilaments but different protofilament numbers can be found in some organisms and specialized cells. The cofactor is Mg(2+). As to expression, expressed in roots, second node, leaf sheaths, and suspension cultured cells.

The protein resides in the cytoplasm. It is found in the cytoskeleton. Functionally, tubulin is the major constituent of microtubules, a cylinder consisting of laterally associated linear protofilaments composed of alpha- and beta-tubulin heterodimers. Microtubules grow by the addition of GTP-tubulin dimers to the microtubule end, where a stabilizing cap forms. Below the cap, tubulin dimers are in GDP-bound state, owing to GTPase activity of alpha-tubulin. The sequence is that of Tubulin beta-3 chain (TUBB3) from Oryza sativa subsp. japonica (Rice).